A 710-amino-acid polypeptide reads, in one-letter code: Lactoperoxidase (710 aa).

An N-terminal signal peptide occupies residues 1–22 (MKVLLRLPALLASLTLLQMAAS). A propeptide spanning residues 23–98 (TRNATRTATI…WEQSLKRLRR (76 aa)) is cleaved from the precursor. N-linked (GlcNAc...) asparagine glycans are attached at residues N25, N104, and N131. The cysteines at positions 130 and 143 are disulfide-linked. D223 is a binding site for heme b. Catalysis depends on H224, which acts as the Proton acceptor. D225 lines the Ca(2+) pocket. An N-linked (GlcNAc...) asparagine glycan is attached at N238. 2 disulfides stabilise this stretch: C244–C254 and C248–C272. The Ca(2+) site is built by T299, F301, D303, and S305. S313 is modified (phosphoserine). N320 carries N-linked (GlcNAc...) asparagine glycosylation. C352 and C363 are joined by a disulfide. Positions 373 and 466 each coordinate heme b. Y480 carries the post-translational modification 3'-nitrotyrosine. Disulfide bonds link C571-C628 and C669-C694.

It belongs to the peroxidase family. XPO subfamily. Ca(2+) is required as a cofactor. It depends on heme b as a cofactor. Expressed in the lacrimal gland with higher levels and 3-fold higher activity in adult females than males and secreted into tears (at protein level).

Its subcellular location is the secreted. The protein localises to the cytoplasm. It carries out the reaction 2 a phenolic donor + H2O2 = 2 a phenolic radical donor + 2 H2O. It catalyses the reaction thiocyanate + H2O2 + H(+) = hypothiocyanous acid + H2O. The catalysed reaction is iodide + H2O2 = hypoiodite + H2O. Its function is as follows. Heme-containing oxidoreductase which catalyzes the conversion of thiocyanate (SCN(-)) into antimicrobial agent hypothiocyanous acid (OSCN(-)) in the presence of hydrogen peroxide (H2O2). Also involved in the conversion of iodide (I(-)) into hypoiodite (IO(-)) in the presence of H2O2. Responsible for the inactivation of a wide range of micro-organisms and hence, important component of defense mechanism. May be implicated in airway host defense against infection. May contribute to maintaining an appropriate H2O2 cellular level, therefore protecting cells from H2O2-caused injuries and inflammation. This Mesocricetus auratus (Golden hamster) protein is Lactoperoxidase (LPO).